Here is a 159-residue protein sequence, read N- to C-terminus: Cyclic pyranopterin monophosphate synthase (159 aa).

Substrate-binding positions include 75–77 (LCH) and 113–114 (ME). D128 is an active-site residue.

Belongs to the MoaC family. In terms of assembly, homohexamer; trimer of dimers.

The enzyme catalyses (8S)-3',8-cyclo-7,8-dihydroguanosine 5'-triphosphate = cyclic pyranopterin phosphate + diphosphate. Its pathway is cofactor biosynthesis; molybdopterin biosynthesis. Catalyzes the conversion of (8S)-3',8-cyclo-7,8-dihydroguanosine 5'-triphosphate to cyclic pyranopterin monophosphate (cPMP). In Thiobacillus denitrificans (strain ATCC 25259 / T1), this protein is Cyclic pyranopterin monophosphate synthase.